The primary structure comprises 155 residues: Small ribosomal subunit protein uS9 (155 aa).

Belongs to the universal ribosomal protein uS9 family.

This Allorhizobium ampelinum (strain ATCC BAA-846 / DSM 112012 / S4) (Agrobacterium vitis (strain S4)) protein is Small ribosomal subunit protein uS9.